We begin with the raw amino-acid sequence, 494 residues long: Alpha-amylase-related protein (494 aa).

A signal peptide spans 1-20 (MFKFALALTLCLAGASLSLA). Position 21 is a pyrrolidone carboxylic acid (Gln-21). Cys-48 and Cys-104 are oxidised to a cystine. Ca(2+) contacts are provided by Asn-118, Gln-169, and Asp-178. Residues Cys-157 and Cys-171 are joined by a disulfide bond. Arg-206 contacts chloride. Asp-208 functions as the Nucleophile in the catalytic mechanism. His-212 contacts Ca(2+). The active-site Proton donor is Glu-245. Residues Asn-308 and Arg-343 each contribute to the chloride site. 3 disulfide bridges follow: Cys-376–Cys-382, Cys-418–Cys-441, and Cys-448–Cys-460.

This sequence belongs to the glycosyl hydrolase 13 family. In terms of assembly, monomer. Requires Ca(2+) as cofactor. The cofactor is chloride.

It is found in the secreted. The enzyme catalyses Endohydrolysis of (1-&gt;4)-alpha-D-glucosidic linkages in polysaccharides containing three or more (1-&gt;4)-alpha-linked D-glucose units.. This chain is Alpha-amylase-related protein (Amyrel), found in Drosophila punjabiensis (Fruit fly).